A 293-amino-acid chain; its full sequence is ESX-3 secretion-associated protein EspG3 (293 aa).

It belongs to the EspG family.

The protein localises to the cytoplasm. The chain is ESX-3 secretion-associated protein EspG3 from Mycolicibacterium smegmatis (strain ATCC 700084 / mc(2)155) (Mycobacterium smegmatis).